A 431-amino-acid polypeptide reads, in one-letter code: 5-methylthioadenosine/S-adenosylhomocysteine deaminase (431 aa).

Positions 66 and 68 each coordinate Zn(2+). Substrate contacts are provided by glutamate 95, arginine 147, and histidine 185. Histidine 212 contacts Zn(2+). Positions 215 and 300 each coordinate substrate. Aspartate 300 is a binding site for Zn(2+).

This sequence belongs to the metallo-dependent hydrolases superfamily. MTA/SAH deaminase family. Zn(2+) is required as a cofactor.

It catalyses the reaction S-adenosyl-L-homocysteine + H2O + H(+) = S-inosyl-L-homocysteine + NH4(+). The enzyme catalyses S-methyl-5'-thioadenosine + H2O + H(+) = S-methyl-5'-thioinosine + NH4(+). Functionally, catalyzes the deamination of 5-methylthioadenosine and S-adenosyl-L-homocysteine into 5-methylthioinosine and S-inosyl-L-homocysteine, respectively. Is also able to deaminate adenosine. The sequence is that of 5-methylthioadenosine/S-adenosylhomocysteine deaminase from Desulfitobacterium hafniense (strain Y51).